Reading from the N-terminus, the 407-residue chain is Protein ZNF365 (407 aa).

At S16 the chain carries Phosphoserine. A C2H2-type; degenerate zinc finger spans residues 26–51 (LRCPRCGDHTRFRSLSSLRAHLEFSH). The residue at position 138 (S138) is a Phosphoserine. Residues 169 to 297 (VEAVDRTIEK…QLEYYQSQQA (129 aa)) are a coiled coil. T175 carries the phosphothreonine modification. A disordered region spans residues 347 to 392 (LKKAKDDRASMQPAKAIHEQAESSRDLCRPPKKGELLGFGRKGNIR). The segment covering 362 to 381 (AIHEQAESSRDLCRPPKKGE) has biased composition (basic and acidic residues). Phosphoserine is present on S369.

Homodimer. Interacts with NDE1 and NDEL1. Does not interact with TUBG1. Interacts with DISC1. Interacts with PARP1. Interacts with MCRS1. In terms of tissue distribution, isoform 1 is expressed in brain. Isoform 2 is expressed in placenta and at low level in lung and liver. Isoform 3 is expressed in kidney and pancreas. Isoform 1 is expressed exclusively in brain.

Its subcellular location is the cytoplasm. The protein localises to the cytoskeleton. It localises to the microtubule organizing center. It is found in the centrosome. In terms of biological role, involved in the regulation of neurogenesis. Negatively regulates neurite outgrowth. Involved in the morphogenesis of basket cells in the somatosensory cortex during embryogenesis. Involved in the positive regulation of oligodendrocyte differentiation during postnatal growth. Involved in dendritic arborization, morphogenesis of spine density dendrite, and establishment of postsynaptic dendrite density in cortical pyramidal neurons. Involved in homologous recombination (HR) repair pathway. Required for proper resolution of DNA double-strand breaks (DSBs) by HR. Is required for recovery of stalled replication forks, and directly contributes to genomic stability. Interacts with PARP1 and mediates MRE11-dependent DNA end resection during replication fork recovery. Contributes to genomic stability by preventing telomere dysfunction. The protein is Protein ZNF365 (ZNF365) of Homo sapiens (Human).